A 160-amino-acid chain; its full sequence is Surface-adhesin protein E (160 aa).

A signal peptide spans 1–15; it reads MKKIILTLSLGLLTA. Residue Cys-16 is the site of N-palmitoyl cysteine attachment. A lipid anchor (S-diacylglycerol cysteine) is attached at Cys-16. The segment at 41–68 is interaction with laminin and plasminogen; the sequence is IRLVKNVNYYIDSESIWVDNQEPQIVHF. The interaction with vitronectin and epithelial cells stretch occupies residues 84–108; sequence PKRYARSVRQYKILNCANYHLTQVR.

As to quaternary structure, homodimer. Interacts with host vitronectin, laminin and plasminogen. Can interact with both immobilized and soluble vitronectin.

Its subcellular location is the cell outer membrane. It localises to the cell surface. Functionally, acts as a multifunctional adhesin involved in direct interactions with host epithelial cells and host proteins, including vitronectin, laminin and plasminogen. In addition, interaction with serum vitronectin plays an important role in bacterial serum resistance, and conversion of plasminogen to plasmin at the cell surface aids in immune evasion and contributes to bacterial virulence. Induces a pro-inflammatory epithelial cell response, leading to interleukin-8 (IL-8) secretion and up-regulation of ICAM1. The sequence is that of Surface-adhesin protein E (pe) from Haemophilus influenzae (strain NTHi 3655).